We begin with the raw amino-acid sequence, 572 residues long: Glutathione hydrolase 5 proenzyme (572 aa).

The Cytoplasmic segment spans residues 1–6 (MAWGHR). Residues 7–29 (TTVCLVLLGVSLGLAIIVLAVVL) traverse the membrane as a helical; Signal-anchor for type II membrane protein segment. The Extracellular portion of the chain corresponds to 30-572 (PHHQASCRPD…LRKAGKASGY (543 aa)). An N-linked (GlcNAc...) asparagine glycan is attached at asparagine 98. Arginine 110 serves as a coordination point for L-glutamate. Asparagine 185, asparagine 194, asparagine 204, asparagine 277, asparagine 303, asparagine 347, and asparagine 377 each carry an N-linked (GlcNAc...) asparagine glycan. Threonine 388 functions as the Nucleophile in the catalytic mechanism. L-glutamate contacts are provided by residues threonine 406, glutamate 427, and 453–454 (SS).

The protein belongs to the gamma-glutamyltransferase family. In terms of assembly, heterodimer composed of the light and heavy chains. The active site is located in the light chain. Cleaved by autocatalysis into a large and a small subunit. In terms of processing, glycosylated. As to expression, widely expressed, but at low level, except in the airway epithelial cells. Detected in brain, heart, kidney, liver, lung, spleen, testis and trachea.

The protein localises to the membrane. The enzyme catalyses glutathione + H2O = L-cysteinylglycine + L-glutamate. It catalyses the reaction an S-substituted glutathione + H2O = an S-substituted L-cysteinylglycine + L-glutamate. The catalysed reaction is leukotriene C4 + H2O = leukotriene D4 + L-glutamate. It carries out the reaction S-[(2E,6E,10E)-geranylgeranyl]-L-glutathione + H2O = S-[(2E,6E,10E)-geranylgeranyl]-L-cysteinylglycine + L-glutamate. The enzyme catalyses an N-terminal (5-L-glutamyl)-[peptide] + an alpha-amino acid = 5-L-glutamyl amino acid + an N-terminal L-alpha-aminoacyl-[peptide]. It participates in lipid metabolism; leukotriene D4 biosynthesis. The protein operates within sulfur metabolism; glutathione metabolism. Inhibited by serine-borate. Cleaves the gamma-glutamyl bond of extracellular glutathione tripeptide (gamma-Glu-Cys-Gly) and certain glutathione conjugates. Hydrolyzes glutathione releasing L-Glu and Cys-Gly dipeptide which is further metabolized to maintain extracellular cysteine levels but also to provide cysteine necessary for intracellular glutathione synthesis. Among glutathione-S-conjugates metabolizes leukotriene C4 (LTC4) and S-geranylgeranyl-glutathione (GGG), but is inactive toward gamma-glutamyl leucine. Converts extracellular LTC4 to LTD4 during acute inflammatory response. Acts as a negative regulator of GGG bioactivity. GGT5 (via GGG catabolism) and ABCC1 (via extracellular transport) establish GGG gradients within lymphoid tissues to position P2RY8-positive lymphocytes at germinal centers in lymphoid follicles and restrict their chemotactic transmigration from blood vessels to bone marrow parenchyma. The transpeptidation reaction, i.e. the transfer of gamma-glutamyl moiety to an acceptor molecule to yield a new gamma-glutamyl compound requires high concentration of dipeptide acceptor and is considered nonphysiological. The polypeptide is Glutathione hydrolase 5 proenzyme (Ggt5) (Rattus norvegicus (Rat)).